Consider the following 417-residue polypeptide: UDP-N-acetylglucosamine 1-carboxyvinyltransferase (417 aa).

22-23 contacts phosphoenolpyruvate; that stretch reads KN. Residue R92 participates in UDP-N-acetyl-alpha-D-glucosamine binding. The active-site Proton donor is the C116. C116 carries the post-translational modification 2-(S-cysteinyl)pyruvic acid O-phosphothioketal. Positions 304 and 326 each coordinate UDP-N-acetyl-alpha-D-glucosamine.

This sequence belongs to the EPSP synthase family. MurA subfamily.

The protein localises to the cytoplasm. The catalysed reaction is phosphoenolpyruvate + UDP-N-acetyl-alpha-D-glucosamine = UDP-N-acetyl-3-O-(1-carboxyvinyl)-alpha-D-glucosamine + phosphate. It functions in the pathway cell wall biogenesis; peptidoglycan biosynthesis. Cell wall formation. Adds enolpyruvyl to UDP-N-acetylglucosamine. The sequence is that of UDP-N-acetylglucosamine 1-carboxyvinyltransferase from Desulfosudis oleivorans (strain DSM 6200 / JCM 39069 / Hxd3) (Desulfococcus oleovorans).